Consider the following 506-residue polypeptide: Cobyric acid synthase (506 aa).

A GATase cobBQ-type domain is found at 251 to 448 (DITIAIVQLP…LHGLFDSDAF (198 aa)). Cys-332 acts as the Nucleophile in catalysis. Residue His-440 is part of the active site.

This sequence belongs to the CobB/CobQ family. CobQ subfamily. As to quaternary structure, homodimer.

It participates in cofactor biosynthesis; adenosylcobalamin biosynthesis. Functionally, catalyzes amidations at positions B, D, E, and G on adenosylcobyrinic A,C-diamide. NH(2) groups are provided by glutamine, and one molecule of ATP is hydrogenolyzed for each amidation. The polypeptide is Cobyric acid synthase (cbiP) (Salmonella typhimurium (strain LT2 / SGSC1412 / ATCC 700720)).